A 131-amino-acid polypeptide reads, in one-letter code: Small ribosomal subunit protein uS8 (131 aa).

The protein belongs to the universal ribosomal protein uS8 family. As to quaternary structure, part of the 30S ribosomal subunit. Contacts proteins S5 and S12.

One of the primary rRNA binding proteins, it binds directly to 16S rRNA central domain where it helps coordinate assembly of the platform of the 30S subunit. This Helicobacter acinonychis (strain Sheeba) protein is Small ribosomal subunit protein uS8.